Here is a 458-residue protein sequence, read N- to C-terminus: Probable threonine--tRNA ligase, cytoplasmic (458 aa).

The TGS domain occupies 41-104 (DPIKITLLPD…EGDCSLEIFG (64 aa)).

Belongs to the class-II aminoacyl-tRNA synthetase family.

The protein localises to the cytoplasm. The catalysed reaction is tRNA(Thr) + L-threonine + ATP = L-threonyl-tRNA(Thr) + AMP + diphosphate + H(+). The polypeptide is Probable threonine--tRNA ligase, cytoplasmic (Arabidopsis thaliana (Mouse-ear cress)).